The chain runs to 605 residues: Replication protein E1 (605 aa).

The short motif at 77 to 79 (KRK) is the Nuclear localization signal element. Serine 82 and serine 90 each carry phosphoserine; by host. The short motif at 89-98 (LSPRLESITL) is the Nuclear export signal element. Residues 145 to 308 (QIGTVDIHYT…TIVGHQSTEA (164 aa)) are DNA-binding region. The 151-residue stretch at 407-557 (VNFIMFLAAL…FPMKADNTPE (151 aa)) folds into the SF3 helicase domain. 433–440 (GPPNTGKS) lines the ATP pocket. Lysine 514 is covalently cross-linked (Glycyl lysine isopeptide (Lys-Gly) (interchain with G-Cter in SUMO)). Residues 580–605 (DQEDEGDNGESQRPFQCSARSANEHL) are disordered. The span at 588–605 (GESQRPFQCSARSANEHL) shows a compositional bias: polar residues.

Belongs to the papillomaviridae E1 protein family. As to quaternary structure, can form hexamers. Interacts with E2 protein; this interaction increases E1 DNA binding specificity. Interacts with host DNA polymerase subunit POLA2. Interacts with host single stranded DNA-binding protein RPA1. Interacts with host TOP1; this interaction stimulates the enzymatic activity of TOP1. In terms of processing, phosphorylated. Post-translationally, sumoylated.

It is found in the host nucleus. It carries out the reaction Couples ATP hydrolysis with the unwinding of duplex DNA by translocating in the 3'-5' direction.. The enzyme catalyses ATP + H2O = ADP + phosphate + H(+). Its function is as follows. ATP-dependent DNA 3'-5' helicase required for initiation of viral DNA replication. It forms a complex with the viral E2 protein. The E1-E2 complex binds to the replication origin which contains binding sites for both proteins. During the initial step, a dimer of E1 interacts with a dimer of protein E2 leading to a complex that binds the viral origin of replication with high specificity. Then, a second dimer of E1 displaces the E2 dimer in an ATP-dependent manner to form the E1 tetramer. Following this, two E1 monomers are added to each half of the site, which results in the formation of two E1 trimers on the viral ori. Subsequently, two hexamers will be created. The double hexamer acts as a bi-directional helicase machinery and unwinds the viral DNA and then recruits the host DNA polymerase to start replication. The protein is Replication protein E1 of Homo sapiens (Human).